A 292-amino-acid chain; its full sequence is tRNA-cytidine(32) 2-sulfurtransferase (292 aa).

The PP-loop motif motif lies at 53 to 58 (SGGKDS). 3 residues coordinate [4Fe-4S] cluster: Cys128, Cys131, and Cys219.

This sequence belongs to the TtcA family. In terms of assembly, homodimer. The cofactor is Mg(2+). [4Fe-4S] cluster serves as cofactor.

The protein resides in the cytoplasm. It catalyses the reaction cytidine(32) in tRNA + S-sulfanyl-L-cysteinyl-[cysteine desulfurase] + AH2 + ATP = 2-thiocytidine(32) in tRNA + L-cysteinyl-[cysteine desulfurase] + A + AMP + diphosphate + H(+). Its pathway is tRNA modification. Catalyzes the ATP-dependent 2-thiolation of cytidine in position 32 of tRNA, to form 2-thiocytidine (s(2)C32). The sulfur atoms are provided by the cysteine/cysteine desulfurase (IscS) system. In Cereibacter sphaeroides (strain ATCC 17023 / DSM 158 / JCM 6121 / CCUG 31486 / LMG 2827 / NBRC 12203 / NCIMB 8253 / ATH 2.4.1.) (Rhodobacter sphaeroides), this protein is tRNA-cytidine(32) 2-sulfurtransferase.